Consider the following 644-residue polypeptide: L-aspartate oxidase 2-a, chloroplastic (644 aa).

FAD is bound by residues 94–97 (SGIA), Lys116, 123–130 (NTNYAQGG), and Asp294. The Proton donor/acceptor role is filled by Arg369. FAD contacts are provided by residues Glu454 and 470–471 (SL).

It belongs to the FAD-dependent oxidoreductase 2 family. NadB subfamily. FAD is required as a cofactor.

It is found in the plastid. The protein localises to the chloroplast. The enzyme catalyses L-aspartate + O2 = iminosuccinate + H2O2. It participates in alkaloid biosynthesis; nicotine biosynthesis. It functions in the pathway cofactor biosynthesis; NAD(+) biosynthesis; iminoaspartate from L-aspartate (oxidase route): step 1/1. In terms of biological role, involved in the biosynthesis of pyridine alkaloid natural products, leading mainly to the production of anabasine, anatabine, nicotine and nornicotine, effective deterrents against herbivores with antiparasitic and pesticide properties (neurotoxins); nornicotine serves as the precursor in the synthesis of the carcinogen compound N'-nitrosonornicotine (NNN). Catalyzes the oxidation of L-aspartate to iminoaspartate. In Nicotiana tabacum (Common tobacco), this protein is L-aspartate oxidase 2-a, chloroplastic.